We begin with the raw amino-acid sequence, 116 residues long: Large ribosomal subunit protein bL20 (116 aa).

Belongs to the bacterial ribosomal protein bL20 family.

Functionally, binds directly to 23S ribosomal RNA and is necessary for the in vitro assembly process of the 50S ribosomal subunit. It is not involved in the protein synthesizing functions of that subunit. This is Large ribosomal subunit protein bL20 from Helicobacter pylori (strain HPAG1).